A 309-amino-acid polypeptide reads, in one-letter code: tRNA-dihydrouridine(16) synthase (309 aa).

Residues 7-9 (PME) and Q68 each bind FMN. C98 serves as the catalytic Proton donor. FMN is bound by residues R137, N198, and 220–221 (GC).

It belongs to the Dus family. DusC subfamily. FMN is required as a cofactor.

It catalyses the reaction 5,6-dihydrouridine(16) in tRNA + NADP(+) = uridine(16) in tRNA + NADPH + H(+). The enzyme catalyses 5,6-dihydrouridine(16) in tRNA + NAD(+) = uridine(16) in tRNA + NADH + H(+). Functionally, catalyzes the synthesis of 5,6-dihydrouridine (D), a modified base found in the D-loop of most tRNAs, via the reduction of the C5-C6 double bond in target uridines. Specifically modifies U16 in tRNAs. This chain is tRNA-dihydrouridine(16) synthase, found in Azotobacter vinelandii.